A 519-amino-acid chain; its full sequence is Cytosol aminopeptidase (519 aa).

Residue Lys-45 is modified to N6-succinyllysine. Ser-54 bears the Phosphoserine mark. N6-succinyllysine is present on residues Lys-61 and Lys-103. Phosphoserine occurs at positions 180 and 194. Zn(2+) contacts are provided by Leu-202 and Met-203. Lys-221 carries the post-translational modification N6-acetyllysine; alternate. Residue Lys-221 is modified to N6-succinyllysine; alternate. The residue at position 238 (Ser-238) is a Phosphoserine. Zn(2+) contacts are provided by Lys-282 and Asp-287. Substrate contacts are provided by Lys-282, Asp-287, Ser-292, and Lys-294. Asp-287 contributes to the Mg(2+) binding site. Lys-294 is an active-site residue. Residues Arg-303, Asp-305, Asp-364, and Glu-366 each contribute to the Zn(2+) site. The substrate site is built by Asp-305 and Asp-364. The Mg(2+) site is built by Asp-364 and Glu-366. Arg-368 is an active-site residue. The residue at position 455 (Lys-455) is an N6-acetyllysine; alternate. Position 455 is an N6-succinyllysine; alternate (Lys-455). Lys-476 is subject to N6-succinyllysine. At Lys-489 the chain carries N6-acetyllysine; alternate. Lys-489 carries the N6-succinyllysine; alternate modification.

It belongs to the peptidase M17 family. As to quaternary structure, homohexamer. It depends on Zn(2+) as a cofactor. Requires Mn(2+) as cofactor.

The protein resides in the cytoplasm. The catalysed reaction is Release of an N-terminal amino acid, Xaa-|-Yaa-, in which Xaa is preferably Leu, but may be other amino acids including Pro although not Arg or Lys, and Yaa may be Pro. Amino acid amides and methyl esters are also readily hydrolyzed, but rates on arylamides are exceedingly low.. The enzyme catalyses an S-substituted L-cysteinylglycine + H2O = an S-substituted L-cysteine + glycine. It carries out the reaction L-cysteinylglycine + H2O = L-cysteine + glycine. It catalyses the reaction S-benzyl-L-cysteinylglycine + H2O = S-benzyl-L-cysteine + glycine. The catalysed reaction is Release of N-terminal proline from a peptide.. In terms of biological role, cytosolic metallopeptidase that catalyzes the removal of unsubstituted N-terminal hydrophobic amino acids from various peptides. The presence of Zn(2+) ions is essential for the peptidase activity, and the association with other cofactors can modulate the substrate spectificity of the enzyme. For instance, in the presence of Mn(2+), it displays a specific Cys-Gly hydrolyzing activity of Cys-Gly-S-conjugates. Involved in the metabolism of glutathione and in the degradation of glutathione S-conjugates, which may play a role in the control of the cell redox status. In Mus musculus (Mouse), this protein is Cytosol aminopeptidase.